Here is an 822-residue protein sequence, read N- to C-terminus: Penicillin-binding protein 1A (822 aa).

Over 1–5 (MRLLK) the chain is Cytoplasmic. A helical; Signal-anchor for type II membrane protein membrane pass occupies residues 6–26 (FLWWTCVTLICGVLLSFSGAY). Over 27–822 (LYLSPSLPSV…DDEGAPIDLF (796 aa)) the chain is Periplasmic. The segment at 48–216 (LKVYSEDGKL…SRYNPLVNPT (169 aa)) is transglycosylase. Glu-86 acts as the Proton donor; for transglycosylase activity in catalysis. The segment at 403 to 744 (IRVQRQEDGT…GTVALPIWIR (342 aa)) is transpeptidase. The active-site Acyl-ester intermediate; for transpeptidase activity is the Ser-461. 2 disordered regions span residues 614 to 654 (AADA…FEPT) and 790 to 822 (KNEDTPPSVNELPPGSFPGSPLPDDEGAPIDLF). Residues 812–822 (PDDEGAPIDLF) are compositionally biased toward acidic residues.

It in the N-terminal section; belongs to the glycosyltransferase 51 family. The protein in the C-terminal section; belongs to the transpeptidase family.

It is found in the cell inner membrane. It catalyses the reaction [GlcNAc-(1-&gt;4)-Mur2Ac(oyl-L-Ala-gamma-D-Glu-L-Lys-D-Ala-D-Ala)](n)-di-trans,octa-cis-undecaprenyl diphosphate + beta-D-GlcNAc-(1-&gt;4)-Mur2Ac(oyl-L-Ala-gamma-D-Glu-L-Lys-D-Ala-D-Ala)-di-trans,octa-cis-undecaprenyl diphosphate = [GlcNAc-(1-&gt;4)-Mur2Ac(oyl-L-Ala-gamma-D-Glu-L-Lys-D-Ala-D-Ala)](n+1)-di-trans,octa-cis-undecaprenyl diphosphate + di-trans,octa-cis-undecaprenyl diphosphate + H(+). The catalysed reaction is Preferential cleavage: (Ac)2-L-Lys-D-Ala-|-D-Ala. Also transpeptidation of peptidyl-alanyl moieties that are N-acyl substituents of D-alanine.. It functions in the pathway cell wall biogenesis; peptidoglycan biosynthesis. Functionally, cell wall formation. Synthesis of cross-linked peptidoglycan from the lipid intermediates. The enzyme has a penicillin-insensitive transglycosylase N-terminal domain (formation of linear glycan strands) and a penicillin-sensitive transpeptidase C-terminal domain (cross-linking of the peptide subunits). This is Penicillin-binding protein 1A (mrcA) from Pseudomonas aeruginosa (strain ATCC 15692 / DSM 22644 / CIP 104116 / JCM 14847 / LMG 12228 / 1C / PRS 101 / PAO1).